The following is a 204-amino-acid chain: Thioredoxin-like 4, chloroplastic (204 aa).

A chloroplast-targeting transit peptide spans 1–27; the sequence is MSSLLNISHCSYHGYSGLTSRGGINTV. The 139-residue stretch at 63–201 folds into the Thioredoxin domain; sequence AKSLSQENLV…IDAAILKYTS (139 aa). Active-site nucleophile residues include C119 and C122. An intrachain disulfide couples C119 to C122.

The protein belongs to the thioredoxin family.

It localises to the plastid. Its subcellular location is the chloroplast. Probable thiol-disulfide oxidoreductase that may participate in various redox reactions. The polypeptide is Thioredoxin-like 4, chloroplastic (Arabidopsis thaliana (Mouse-ear cress)).